Consider the following 597-residue polypeptide: Aspartate--tRNA(Asp/Asn) ligase (597 aa).

Glu-182 provides a ligand contact to L-aspartate. The aspartate stretch occupies residues 206 to 209 (QLFK). Arg-228 lines the L-aspartate pocket. ATP-binding positions include 228–230 (RDE) and Gln-237. His-455 contributes to the L-aspartate binding site. ATP is bound at residue Glu-489. Arg-496 lines the L-aspartate pocket. Residue 541-544 (GFDR) coordinates ATP.

It belongs to the class-II aminoacyl-tRNA synthetase family. Type 1 subfamily. In terms of assembly, homodimer.

The protein resides in the cytoplasm. It catalyses the reaction tRNA(Asx) + L-aspartate + ATP = L-aspartyl-tRNA(Asx) + AMP + diphosphate. Aspartyl-tRNA synthetase with relaxed tRNA specificity since it is able to aspartylate not only its cognate tRNA(Asp) but also tRNA(Asn). Reaction proceeds in two steps: L-aspartate is first activated by ATP to form Asp-AMP and then transferred to the acceptor end of tRNA(Asp/Asn). This chain is Aspartate--tRNA(Asp/Asn) ligase, found in Desulfosudis oleivorans (strain DSM 6200 / JCM 39069 / Hxd3) (Desulfococcus oleovorans).